The sequence spans 382 residues: Layilin (382 aa).

A signal peptide spans Met1–Ala21. Over Ala22–Tyr235 the chain is Extracellular. A C-type lectin domain is found at Thr45–Lys185. 2 disulfide bridges follow: Cys71/Cys184 and Cys150/Cys176. The N-linked (GlcNAc...) asparagine glycan is linked to Asn117. The helical transmembrane segment at Ile236–Val256 threads the bilayer. The Cytoplasmic segment spans residues Trp257–Tyr382. The interval Gln266–Asn285 is disordered. Phosphoserine is present on residues Ser286 and Ser299. The tract at residues Asp330 to Trp374 is interaction with NF2. An interaction with TLN1 region spans residues Asn337–Tyr382. Repeat copies occupy residues Glu340 to Val344, Glu350 to Val354, Asn356 to Tyr359, Glu371 to Val375, and Asn377 to Tyr380. Residues Glu340–Val375 are 3 X 5 AA repeats of E-S-G-X-V. Positions Asn356–Tyr380 are 2 X 4 AA repeats of N-X-I-Y.

Interacts with NF2, RDX and TLN1.

The protein localises to the membrane. Receptor for hyaluronate. The sequence is that of Layilin (LAYN) from Homo sapiens (Human).